We begin with the raw amino-acid sequence, 211 residues long: Protein-L-isoaspartate O-methyltransferase (211 aa).

Residue Ser62 is part of the active site.

The protein belongs to the methyltransferase superfamily. L-isoaspartyl/D-aspartyl protein methyltransferase family.

It is found in the cytoplasm. The catalysed reaction is [protein]-L-isoaspartate + S-adenosyl-L-methionine = [protein]-L-isoaspartate alpha-methyl ester + S-adenosyl-L-homocysteine. Functionally, catalyzes the methyl esterification of L-isoaspartyl residues in peptides and proteins that result from spontaneous decomposition of normal L-aspartyl and L-asparaginyl residues. It plays a role in the repair and/or degradation of damaged proteins. The polypeptide is Protein-L-isoaspartate O-methyltransferase (Shewanella denitrificans (strain OS217 / ATCC BAA-1090 / DSM 15013)).